The primary structure comprises 77 residues: U11-lycotoxin-Ls1d (77 aa).

An N-terminal signal peptide occupies residues 1–20 (MKLIIFTGLVLFAIVSLIEA). Residues 21–26 (EEESGR) constitute a propeptide that is removed on maturation.

The protein belongs to the neurotoxin 19 (CSTX) family. 10 (U11-Lctx) subfamily. Post-translationally, contains 4 disulfide bonds. In terms of tissue distribution, expressed by the venom gland.

It localises to the secreted. This is U11-lycotoxin-Ls1d from Lycosa singoriensis (Wolf spider).